The following is a 417-amino-acid chain: Serine/threonine transporter SstT (417 aa).

8 consecutive transmembrane segments (helical) span residues isoleucine 21–methionine 41, phenylalanine 49–isoleucine 69, isoleucine 83–phenylalanine 103, alanine 142–leucine 162, isoleucine 193–glycine 213, leucine 218–phenylalanine 238, isoleucine 291–leucine 311, and leucine 331–isoleucine 351.

It belongs to the dicarboxylate/amino acid:cation symporter (DAACS) (TC 2.A.23) family.

The protein localises to the cell inner membrane. The enzyme catalyses L-serine(in) + Na(+)(in) = L-serine(out) + Na(+)(out). It carries out the reaction L-threonine(in) + Na(+)(in) = L-threonine(out) + Na(+)(out). Functionally, involved in the import of serine and threonine into the cell, with the concomitant import of sodium (symport system). In Proteus mirabilis (strain HI4320), this protein is Serine/threonine transporter SstT.